We begin with the raw amino-acid sequence, 232 residues long: 6-phosphogluconolactonase (232 aa).

Belongs to the glucosamine/galactosamine-6-phosphate isomerase family. 6-phosphogluconolactonase subfamily.

It catalyses the reaction 6-phospho-D-glucono-1,5-lactone + H2O = 6-phospho-D-gluconate + H(+). It functions in the pathway carbohydrate degradation; pentose phosphate pathway; D-ribulose 5-phosphate from D-glucose 6-phosphate (oxidative stage): step 2/3. Functionally, hydrolysis of 6-phosphogluconolactone to 6-phosphogluconate. This chain is 6-phosphogluconolactonase (pgl), found in Haemophilus influenzae (strain ATCC 51907 / DSM 11121 / KW20 / Rd).